Reading from the N-terminus, the 957-residue chain is Collagen alpha-1(XXI) chain (957 aa).

The N-terminal stretch at 1 to 16 (MPGIIYILCSILLIES) is a signal peptide. The region spanning 37 to 211 (DLVFILDGSW…RIREIMKQKL (175 aa)) is the VWFA domain. A Laminin G-like domain is found at 230–412 (GFDILLGLGI…LQKLRIYCDP (183 aa)). Disordered stretches follow at residues 441-788 (PAPC…GKEQ) and 820-935 (CKTQ…DAGI). 8 Collagen-like domains span residues 448-501 (PGEK…PRGF), 502-543 (AGLK…DKGD), 544-591 (IGID…EEGK), 592-642 (PGPP…ISGP), 643-684 (EGIS…IPGQ), 685-741 (QGYT…EIGE), 742-786 (HGHR…QQGK), and 825-882 (GSPG…GNKG). The span at 483 to 498 (TSGSPGIPGSPGVQGP) shows a compositional bias: low complexity. Basic and acidic residues predominate over residues 535–556 (MGPKGDKGDIGIDGKKGTKGDK). Low complexity-rich tracts occupy residues 597-616 (MEGL…DGAN) and 633-649 (PTGT…SGPQ). Positions 733–744 (KGEKGEIGEHGH) are enriched in basic and acidic residues. A compositionally biased stretch (low complexity) spans 775–786 (QGLPGPKGQQGK).

The protein belongs to the fibril-associated collagens with interrupted helices (FACIT) family.

The protein resides in the secreted. The protein localises to the extracellular space. It localises to the extracellular matrix. Its subcellular location is the cytoplasm. This is Collagen alpha-1(XXI) chain (col21a1) from Xenopus laevis (African clawed frog).